The primary structure comprises 167 residues: MTEETTAIVQAGPTSIWLSENGFEHQALEADHSGVELIKVEADFLIPLATALYAYGFNYLQCQGAYDLGPGKELVSFYHLVKVTDNVDSPVEVRLKVFLPRDNPRVASVYWIWKAADWQERESYDMFGIIYEGHPHLKRILMPEDWVGWPLRKDYVSPEFYELQDAY.

This sequence belongs to the complex I 30 kDa subunit family. In terms of assembly, NDH-1 can be composed of about 15 different subunits; different subcomplexes with different compositions have been identified which probably have different functions.

The protein localises to the cellular thylakoid membrane. The enzyme catalyses a plastoquinone + NADH + (n+1) H(+)(in) = a plastoquinol + NAD(+) + n H(+)(out). It carries out the reaction a plastoquinone + NADPH + (n+1) H(+)(in) = a plastoquinol + NADP(+) + n H(+)(out). NDH-1 shuttles electrons from an unknown electron donor, via FMN and iron-sulfur (Fe-S) centers, to quinones in the respiratory and/or the photosynthetic chain. The immediate electron acceptor for the enzyme in this species is believed to be plastoquinone. Couples the redox reaction to proton translocation, and thus conserves the redox energy in a proton gradient. Cyanobacterial NDH-1 also plays a role in inorganic carbon-concentration. In Microcystis aeruginosa (strain NIES-843 / IAM M-2473), this protein is NAD(P)H-quinone oxidoreductase subunit J.